The chain runs to 166 residues: Putative peroxiredoxin (166 aa).

In terms of domain architecture, Thioredoxin spans Glu1–Leu166. Residue Cys56 is the Cysteine sulfenic acid (-SOH) intermediate of the active site. The short motif at Ser164–Leu166 is the Microbody targeting signal element.

Belongs to the peroxiredoxin family. Prx5 subfamily. Homodimer; disulfide-linked, upon oxidation.

It catalyses the reaction a hydroperoxide + [thioredoxin]-dithiol = an alcohol + [thioredoxin]-disulfide + H2O. Its function is as follows. Thiol-specific peroxidase that catalyzes the reduction of hydrogen peroxide and organic hydroperoxides to water and alcohols, respectively. Plays a role in cell protection against oxidative stress by detoxifying peroxides and as sensor of hydrogen peroxide-mediated signaling events. This Malassezia furfur (Pityriasis versicolor infection agent) protein is Putative peroxiredoxin.